Reading from the N-terminus, the 366-residue chain is Methylthioribose-1-phosphate isomerase (366 aa).

Residues 53-55 (RGA), Arg-90, and Gln-203 contribute to the substrate site. Asp-244 functions as the Proton donor in the catalytic mechanism. Residue 254-255 (NK) participates in substrate binding.

Belongs to the eIF-2B alpha/beta/delta subunits family. MtnA subfamily.

The catalysed reaction is 5-(methylsulfanyl)-alpha-D-ribose 1-phosphate = 5-(methylsulfanyl)-D-ribulose 1-phosphate. It participates in amino-acid biosynthesis; L-methionine biosynthesis via salvage pathway; L-methionine from S-methyl-5-thio-alpha-D-ribose 1-phosphate: step 1/6. Functionally, catalyzes the interconversion of methylthioribose-1-phosphate (MTR-1-P) into methylthioribulose-1-phosphate (MTRu-1-P). This Methylocella silvestris (strain DSM 15510 / CIP 108128 / LMG 27833 / NCIMB 13906 / BL2) protein is Methylthioribose-1-phosphate isomerase.